A 640-amino-acid polypeptide reads, in one-letter code: Probable potassium transport system protein Kup 2 (640 aa).

Residues 1–20 (MTADIAATPAETPATNGHGD) are disordered. 12 helical membrane passes run 30–50 (LTLG…LYAL), 71–91 (VVSL…VVIL), 117–137 (ASII…DAVI), 155–175 (AAFD…LFAV), 183–203 (VAAF…IAAF), 224–244 (FMLH…LAVT), 265–285 (WLFV…ALVI), 294–314 (PFFL…ATVA), 363–383 (LLLV…ALAS), 385–405 (YGIS…VVIW), 410–430 (WSPI…LTFL), and 437–457 (VLEG…LMYT).

This sequence belongs to the HAK/KUP transporter (TC 2.A.72) family.

The protein resides in the cell inner membrane. It catalyses the reaction K(+)(in) + H(+)(in) = K(+)(out) + H(+)(out). Transport of potassium into the cell. Likely operates as a K(+):H(+) symporter. This Bradyrhizobium sp. (strain ORS 278) protein is Probable potassium transport system protein Kup 2.